Consider the following 320-residue polypeptide: Nod factor export ATP-binding protein I (320 aa).

The 231-residue stretch at 15-245 folds into the ABC transporter domain; the sequence is VSATGVWKKR…LGALKILEID (231 aa). 47–54 is a binding site for ATP; that stretch reads GTNGAGKS.

It belongs to the ABC transporter superfamily. Lipooligosaccharide exporter (TC 3.A.1.102) family. The complex is composed of two ATP-binding proteins (NodI) and two transmembrane proteins (NodJ).

It localises to the cell inner membrane. Its function is as follows. Part of the ABC transporter complex NodIJ involved in the export of the nodulation factors (Nod factors), the bacterial signal molecules that induce symbiosis and subsequent nodulation induction. Nod factors are LCO (lipo-chitin oligosaccharide), a modified beta-1,4-linked N-acetylglucosamine oligosaccharide. This subunit is responsible for energy coupling to the transport system. This chain is Nod factor export ATP-binding protein I, found in Azorhizobium caulinodans (strain ATCC 43989 / DSM 5975 / JCM 20966 / LMG 6465 / NBRC 14845 / NCIMB 13405 / ORS 571).